Here is a 174-residue protein sequence, read N- to C-terminus: Ribosome maturation factor RimM (174 aa).

One can recognise a PRC barrel domain in the interval 97-169; the sequence is PDTYYDHQLE…ILEIDPPDGL (73 aa).

This sequence belongs to the RimM family. In terms of assembly, binds ribosomal protein uS19.

It localises to the cytoplasm. Its function is as follows. An accessory protein needed during the final step in the assembly of 30S ribosomal subunit, possibly for assembly of the head region. Essential for efficient processing of 16S rRNA. May be needed both before and after RbfA during the maturation of 16S rRNA. It has affinity for free ribosomal 30S subunits but not for 70S ribosomes. This is Ribosome maturation factor RimM from Mycobacterium ulcerans (strain Agy99).